A 317-amino-acid chain; its full sequence is tRNA dimethylallyltransferase (317 aa).

Position 13-20 (13-20 (GPTASGKS)) interacts with ATP. 15–20 (TASGKS) serves as a coordination point for substrate.

The protein belongs to the IPP transferase family. As to quaternary structure, monomer. Mg(2+) is required as a cofactor.

The catalysed reaction is adenosine(37) in tRNA + dimethylallyl diphosphate = N(6)-dimethylallyladenosine(37) in tRNA + diphosphate. Its function is as follows. Catalyzes the transfer of a dimethylallyl group onto the adenine at position 37 in tRNAs that read codons beginning with uridine, leading to the formation of N6-(dimethylallyl)adenosine (i(6)A). This chain is tRNA dimethylallyltransferase, found in Kineococcus radiotolerans (strain ATCC BAA-149 / DSM 14245 / SRS30216).